The chain runs to 90 residues: Small ribosomal subunit protein bS20 (90 aa).

Over residues 1–15 (MANHKSAQKRIRQTK) the composition is skewed to basic residues. The tract at residues 1–22 (MANHKSAQKRIRQTKTRTERNR) is disordered.

This sequence belongs to the bacterial ribosomal protein bS20 family.

Binds directly to 16S ribosomal RNA. In Helicobacter hepaticus (strain ATCC 51449 / 3B1), this protein is Small ribosomal subunit protein bS20.